A 202-amino-acid polypeptide reads, in one-letter code: Imidazoleglycerol-phosphate dehydratase (202 aa).

The protein belongs to the imidazoleglycerol-phosphate dehydratase family.

The protein localises to the cytoplasm. It catalyses the reaction D-erythro-1-(imidazol-4-yl)glycerol 3-phosphate = 3-(imidazol-4-yl)-2-oxopropyl phosphate + H2O. It functions in the pathway amino-acid biosynthesis; L-histidine biosynthesis; L-histidine from 5-phospho-alpha-D-ribose 1-diphosphate: step 6/9. The protein is Imidazoleglycerol-phosphate dehydratase of Synechococcus sp. (strain CC9605).